The chain runs to 167 residues: 6,7-dimethyl-8-ribityllumazine synthase (167 aa).

5-amino-6-(D-ribitylamino)uracil contacts are provided by residues Phe26, 60 to 62, and 89 to 91; these read AFE and AVI. A (2S)-2-hydroxy-3-oxobutyl phosphate-binding site is contributed by 94-95; the sequence is ET. The active-site Proton donor is His97. A 5-amino-6-(D-ribitylamino)uracil-binding site is contributed by Phe122. Arg136 contacts (2S)-2-hydroxy-3-oxobutyl phosphate.

It belongs to the DMRL synthase family. In terms of assembly, forms an icosahedral capsid composed of 60 subunits, arranged as a dodecamer of pentamers.

The catalysed reaction is (2S)-2-hydroxy-3-oxobutyl phosphate + 5-amino-6-(D-ribitylamino)uracil = 6,7-dimethyl-8-(1-D-ribityl)lumazine + phosphate + 2 H2O + H(+). Its pathway is cofactor biosynthesis; riboflavin biosynthesis; riboflavin from 2-hydroxy-3-oxobutyl phosphate and 5-amino-6-(D-ribitylamino)uracil: step 1/2. In terms of biological role, catalyzes the formation of 6,7-dimethyl-8-ribityllumazine by condensation of 5-amino-6-(D-ribitylamino)uracil with 3,4-dihydroxy-2-butanone 4-phosphate. This is the penultimate step in the biosynthesis of riboflavin. In Vesicomyosocius okutanii subsp. Calyptogena okutanii (strain HA), this protein is 6,7-dimethyl-8-ribityllumazine synthase.